The following is a 210-amino-acid chain: uncharacterized protein (210 aa).

The region spanning 90 to 193 is the Fe2OG dioxygenase domain; it reads KPDQIIVNEY…RISITFRNVI (104 aa).

This is an uncharacterized protein from Acanthamoeba polyphaga (Amoeba).